The sequence spans 139 residues: D-ribose pyranase (139 aa).

Histidine 20 serves as the catalytic Proton donor. Substrate contacts are provided by residues aspartate 28, histidine 106, and 128 to 130; that span reads YAN.

This sequence belongs to the RbsD / FucU family. RbsD subfamily. As to quaternary structure, homodecamer.

Its subcellular location is the cytoplasm. It carries out the reaction beta-D-ribopyranose = beta-D-ribofuranose. The protein operates within carbohydrate metabolism; D-ribose degradation; D-ribose 5-phosphate from beta-D-ribopyranose: step 1/2. In terms of biological role, catalyzes the interconversion of beta-pyran and beta-furan forms of D-ribose. The sequence is that of D-ribose pyranase from Shewanella halifaxensis (strain HAW-EB4).